Here is a 436-residue protein sequence, read N- to C-terminus: 3-ketoacyl-CoA thiolase (436 aa).

The active-site Acyl-thioester intermediate is the cysteine 99. Catalysis depends on proton acceptor residues histidine 392 and cysteine 422.

The protein belongs to the thiolase-like superfamily. Thiolase family. Heterotetramer of two alpha chains (FadJ) and two beta chains (FadI).

The protein resides in the cytoplasm. The catalysed reaction is an acyl-CoA + acetyl-CoA = a 3-oxoacyl-CoA + CoA. The protein operates within lipid metabolism; fatty acid beta-oxidation. Functionally, catalyzes the final step of fatty acid oxidation in which acetyl-CoA is released and the CoA ester of a fatty acid two carbons shorter is formed. The polypeptide is 3-ketoacyl-CoA thiolase (Shigella boydii serotype 4 (strain Sb227)).